The primary structure comprises 458 residues: Bifunctional protein GlmU (458 aa).

A pyrophosphorylase region spans residues 1–230; that stretch reads MLQIDVVILA…DWEVVGVNDK (230 aa). UDP-N-acetyl-alpha-D-glucosamine-binding positions include 9–12, Lys23, Gln75, and 80–81; these read LAAG and GT. A Mg(2+)-binding site is contributed by Asp104. The UDP-N-acetyl-alpha-D-glucosamine site is built by Gly139, Glu155, Asn170, and Asn228. Asn228 is a Mg(2+) binding site. The linker stretch occupies residues 231–251; that stretch reads IQLSTLERAHQQDVAKGLMEQ. The segment at 252-458 is N-acetyltransferase; the sequence is GVMFADPARF…NWKRPKKNKD (207 aa). UDP-N-acetyl-alpha-D-glucosamine contacts are provided by Arg334 and Lys352. Residue His364 is the Proton acceptor of the active site. UDP-N-acetyl-alpha-D-glucosamine is bound by residues Tyr367 and Asn378. Acetyl-CoA contacts are provided by residues Ala381, 387–388, Ser406, Ala424, and Arg441; that span reads NY.

This sequence in the N-terminal section; belongs to the N-acetylglucosamine-1-phosphate uridyltransferase family. The protein in the C-terminal section; belongs to the transferase hexapeptide repeat family. As to quaternary structure, homotrimer. Requires Mg(2+) as cofactor.

The protein localises to the cytoplasm. The catalysed reaction is alpha-D-glucosamine 1-phosphate + acetyl-CoA = N-acetyl-alpha-D-glucosamine 1-phosphate + CoA + H(+). It catalyses the reaction N-acetyl-alpha-D-glucosamine 1-phosphate + UTP + H(+) = UDP-N-acetyl-alpha-D-glucosamine + diphosphate. Its pathway is nucleotide-sugar biosynthesis; UDP-N-acetyl-alpha-D-glucosamine biosynthesis; N-acetyl-alpha-D-glucosamine 1-phosphate from alpha-D-glucosamine 6-phosphate (route II): step 2/2. It functions in the pathway nucleotide-sugar biosynthesis; UDP-N-acetyl-alpha-D-glucosamine biosynthesis; UDP-N-acetyl-alpha-D-glucosamine from N-acetyl-alpha-D-glucosamine 1-phosphate: step 1/1. The protein operates within bacterial outer membrane biogenesis; LPS lipid A biosynthesis. Its function is as follows. Catalyzes the last two sequential reactions in the de novo biosynthetic pathway for UDP-N-acetylglucosamine (UDP-GlcNAc). The C-terminal domain catalyzes the transfer of acetyl group from acetyl coenzyme A to glucosamine-1-phosphate (GlcN-1-P) to produce N-acetylglucosamine-1-phosphate (GlcNAc-1-P), which is converted into UDP-GlcNAc by the transfer of uridine 5-monophosphate (from uridine 5-triphosphate), a reaction catalyzed by the N-terminal domain. This is Bifunctional protein GlmU from Nitrosomonas eutropha (strain DSM 101675 / C91 / Nm57).